The following is a 215-amino-acid chain: Probable phosphoglycerate mutase GpmB (215 aa).

Residues 8–15, 21–22, R58, R60, 82–85, 104–105, and 151–152 contribute to the substrate site; these read RHGETQWN, QG, ELDM, RR, and GI. The active-site Tele-phosphohistidine intermediate is H9. The active-site Proton donor/acceptor is the E82.

It belongs to the phosphoglycerate mutase family. GpmB subfamily.

It catalyses the reaction (2R)-2-phosphoglycerate = (2R)-3-phosphoglycerate. Its pathway is carbohydrate degradation; glycolysis; pyruvate from D-glyceraldehyde 3-phosphate: step 3/5. This chain is Probable phosphoglycerate mutase GpmB, found in Klebsiella pneumoniae (strain 342).